The chain runs to 285 residues: Putative pyruvate, phosphate dikinase regulatory protein (285 aa).

165–172 contributes to the ADP binding site; it reads GVSRTSKT.

The protein belongs to the pyruvate, phosphate/water dikinase regulatory protein family. PDRP subfamily.

The catalysed reaction is N(tele)-phospho-L-histidyl/L-threonyl-[pyruvate, phosphate dikinase] + ADP = N(tele)-phospho-L-histidyl/O-phospho-L-threonyl-[pyruvate, phosphate dikinase] + AMP + H(+). It carries out the reaction N(tele)-phospho-L-histidyl/O-phospho-L-threonyl-[pyruvate, phosphate dikinase] + phosphate + H(+) = N(tele)-phospho-L-histidyl/L-threonyl-[pyruvate, phosphate dikinase] + diphosphate. Bifunctional serine/threonine kinase and phosphorylase involved in the regulation of the pyruvate, phosphate dikinase (PPDK) by catalyzing its phosphorylation/dephosphorylation. The sequence is that of Putative pyruvate, phosphate dikinase regulatory protein from Lactobacillus delbrueckii subsp. bulgaricus (strain ATCC BAA-365 / Lb-18).